The sequence spans 305 residues: MQKYDIKTFQGMILALQDYWAQNGCTIVQPLDMEVGAGTSHPMTCLRALGPEPMSTAYVQPSRRPTDGRYGENPNRLQHYYQFQVALKPSPDNIQELYLGSLEVLGVDPLVHDIRFVEDNWENPTLGAWGLGWEVWLNGMEVTQFTYFQQVGGLECKPVTGEITYGIERLAMYIQEVDSVYDLVWNIAPDGSKVTYGDIFHQNEVEQSTYNFEHADVEFLFGFFEQCEKECKELLELEKPLPLPAYERILKAGHAFNLLDARKAISVTERQRYILRIRNLTKAVAEAYYASREALGFPMCKKEQA.

The protein belongs to the class-II aminoacyl-tRNA synthetase family. In terms of assembly, tetramer of two alpha and two beta subunits.

Its subcellular location is the cytoplasm. It carries out the reaction tRNA(Gly) + glycine + ATP = glycyl-tRNA(Gly) + AMP + diphosphate. This is Glycine--tRNA ligase alpha subunit from Vibrio campbellii (strain ATCC BAA-1116).